A 708-amino-acid polypeptide reads, in one-letter code: Glycine--tRNA ligase beta subunit (708 aa).

Belongs to the class-II aminoacyl-tRNA synthetase family. Tetramer of two alpha and two beta subunits.

It is found in the cytoplasm. The enzyme catalyses tRNA(Gly) + glycine + ATP = glycyl-tRNA(Gly) + AMP + diphosphate. The sequence is that of Glycine--tRNA ligase beta subunit from Paracidovorax citrulli (strain AAC00-1) (Acidovorax citrulli).